Consider the following 259-residue polypeptide: Adenosylcobinamide-GDP ribazoletransferase (259 aa).

6 consecutive transmembrane segments (helical) span residues isoleucine 27–isoleucine 47, phenylalanine 51–asparagine 71, valine 100–alanine 120, leucine 124–isoleucine 144, phenylalanine 175–alanine 195, and valine 219–alanine 239.

It belongs to the CobS family. Mg(2+) is required as a cofactor.

It localises to the cell membrane. The enzyme catalyses alpha-ribazole + adenosylcob(III)inamide-GDP = adenosylcob(III)alamin + GMP + H(+). It carries out the reaction alpha-ribazole 5'-phosphate + adenosylcob(III)inamide-GDP = adenosylcob(III)alamin 5'-phosphate + GMP + H(+). It functions in the pathway cofactor biosynthesis; adenosylcobalamin biosynthesis; adenosylcobalamin from cob(II)yrinate a,c-diamide: step 7/7. Functionally, joins adenosylcobinamide-GDP and alpha-ribazole to generate adenosylcobalamin (Ado-cobalamin). Also synthesizes adenosylcobalamin 5'-phosphate from adenosylcobinamide-GDP and alpha-ribazole 5'-phosphate. The sequence is that of Adenosylcobinamide-GDP ribazoletransferase from Thermoplasma volcanium (strain ATCC 51530 / DSM 4299 / JCM 9571 / NBRC 15438 / GSS1).